The sequence spans 499 residues: Trichoplein keratin filament-binding protein (499 aa).

Coiled coils occupy residues 17 to 143 (LEQQ…LYEQ), 169 to 304 (EQIT…LSAL), and 405 to 485 (NRER…TQRG). The trichohyalin/plectin homology domain stretch occupies residues 260–426 (RKMEQCRKKT…RQFTSREKKQ (167 aa)).

The protein belongs to the TCHP family.

It is found in the cytoplasm. It localises to the cytoskeleton. The protein localises to the microtubule organizing center. Its subcellular location is the centrosome. In terms of biological role, may act as a 'capping' or 'branching' protein for keratin filaments in the cell periphery. May regulate K8/K18 filament and desmosome organization mainly at the apical or peripheral regions of simple epithelial cells. The sequence is that of Trichoplein keratin filament-binding protein from Xenopus laevis (African clawed frog).